The sequence spans 772 residues: Phosphatidylinositol 4-phosphate 5-kinase 5 (772 aa).

The segment at 22 to 56 is disordered; it reads AKKRANSVFGTVSVAPHTDNDTTTDDNDDETTTNR. Acidic residues predominate over residues 43–52; that stretch reads TTTDDNDDET. MORN repeat units follow at residues 75-97, 98-120, 121-143, 144-166, 167-189, 190-212, 213-235, and 236-257; these read YTGQ…DGCM, YIGD…SGAT, YEGE…SGDA, YKGQ…NGDA, YDGE…DGSY, YIGE…NGNR, YDGF…NGSF, and YVGH…SGNE. The 392-residue stretch at 377 to 768 folds into the PIPK domain; the sequence is SKGHRNYELM…RFRDFIFKVF (392 aa). The tract at residues 646-665 is disordered; sequence SGARTPIGESEEESGPRLSR. The interval 728 to 749 is activation loop; that stretch reads YDISKKLEHAYKSIQYDPSSIS.

The enzyme catalyses a 1,2-diacyl-sn-glycero-3-phospho-(1D-myo-inositol 4-phosphate) + ATP = a 1,2-diacyl-sn-glycero-3-phospho-(1D-myo-inositol-4,5-bisphosphate) + ADP + H(+). This chain is Phosphatidylinositol 4-phosphate 5-kinase 5 (PIP5K5), found in Arabidopsis thaliana (Mouse-ear cress).